The chain runs to 296 residues: Transmembrane O-methyltransferase (296 aa).

The chain crosses the membrane as a helical span at residues 36-56 (VGTMSPAIALAFLPLVVTLLV). Residues Glu-142, 144-145 (GT), Ser-150, Glu-168, and Ser-198 contribute to the S-adenosyl-L-methionine site.

It belongs to the class I-like SAM-binding methyltransferase superfamily. Cation-dependent O-methyltransferase family. Interacts with LHFPL5, PCDH15, TMC1, TMC2 and TMIE. Interacts directly with TMC1. The interaction of TOMT with TMC1 and TMC2 is required for the transportation of TMC1/2 into the stereocilia of hair cells.

It localises to the membrane. The protein resides in the cytoplasm. Its subcellular location is the endoplasmic reticulum. The catalysed reaction is a catechol + S-adenosyl-L-methionine = a guaiacol + S-adenosyl-L-homocysteine + H(+). Functionally, catalyzes the O-methylation, and thereby the inactivation, of catecholamine neurotransmitters and catechol hormones. Required for auditory function. Component of the cochlear hair cell's mechanotransduction (MET) machinery. Involved in the assembly of the asymmetric tip-link MET complex. Required for transportation of TMC1 and TMC2 proteins into the mechanically sensitive stereocilia of the hair cells. The function in MET is independent of the enzymatic activity. This is Transmembrane O-methyltransferase from Macaca mulatta (Rhesus macaque).